Consider the following 535-residue polypeptide: D-2-hydroxyglutarate dehydrogenase, mitochondrial (535 aa).

A mitochondrion-targeting transit peptide spans 1 to 50; it reads MVLHLVPRWSASLFRASPRWKKTYSQRASAQLKWLGCPRSVYSPLACRAY. An FAD-binding PCMH-type domain is found at 110 to 289; it reads VRGCSKVLLR…TAVSIVCPPR (180 aa). K115 is subject to N6-succinyllysine. Residues R400, T404, and K415 each coordinate (R)-2-hydroxyglutarate. R400 is a (R)-lactate binding site. (R)-malate is bound by residues R400, T404, and K415. Zn(2+) contacts are provided by H448 and H455. Residue N457 participates in (R)-2-hydroxyglutarate binding. Position 489 (E489) interacts with Zn(2+). Residue H490 participates in (R)-2-hydroxyglutarate binding. Residue H490 participates in (R)-lactate binding. H490 contributes to the (R)-malate binding site.

The protein belongs to the FAD-binding oxidoreductase/transferase type 4 family. FAD serves as cofactor.

Its subcellular location is the mitochondrion. The enzyme catalyses (R)-2-hydroxyglutarate + A = 2-oxoglutarate + AH2. It carries out the reaction (R)-malate + A = oxaloacetate + AH2. Activated by zinc, cobalt and manganese ions. Inhibited by EDTA. In terms of biological role, catalyzes the oxidation of D-2-hydroxyglutarate (D-2-HG) to alpha-ketoglutarate. Also catalyzes the oxidation of other D-2-hydroxyacids, such as D-malate (D-MAL) and D-lactate (D-LAC). Exhibits high activities towards D-2-HG and D-MAL but a very weak activity towards D-LAC. The polypeptide is D-2-hydroxyglutarate dehydrogenase, mitochondrial (Rattus norvegicus (Rat)).